Here is a 76-residue protein sequence, read N- to C-terminus: CLAVATA3/ESR (CLE)-related protein 46 (76 aa).

An N-terminal signal peptide occupies residues 1 to 26 (MRRHDIIIKLLLLMCLLLSRFVTREC). Residues 53–76 (EEKKWHKHPSGPNPTGNRHPPVKH) are disordered. Pro61 and Pro64 each carry hydroxyproline. An O-linked (Ara...) hydroxyproline glycan is attached at Pro64.

Belongs to the CLV3/ESR signal peptide family. In terms of processing, the O-glycosylation (arabinosylation) of the hydroxyproline Pro-64 enhances binding affinity of the CLE46p peptide for its receptor.

Its subcellular location is the secreted. It is found in the extracellular space. Its function is as follows. Extracellular signal peptide that regulates cell fate. This chain is CLAVATA3/ESR (CLE)-related protein 46, found in Arabidopsis thaliana (Mouse-ear cress).